Reading from the N-terminus, the 173-residue chain is Alpha-crystallin A chain (173 aa).

At Met-1 the chain carries N-acetylmethionine. The tract at residues 1 to 63 (MDIAIQHPWF…RTVLDSGVSE (63 aa)) is required for complex formation with BFSP1 and BFSP2. Gln-6 is modified (deamidated glutamine; partial). Ser-45 bears the Phosphoserine mark. Gln-50 carries the deamidated glutamine; partial modification. The region spanning 52–162 (LFRTVLDSGV…GHSERAIPVS (111 aa)) is the sHSP domain. N6-acetyllysine is present on Lys-70. His-79 is a Zn(2+) binding site. Deamidated glutamine; partial is present on Gln-90. Residue Lys-99 is modified to N6-acetyllysine. His-100 is a Zn(2+) binding site. Asn-101 is modified (deamidated asparagine; partial). Positions 102 and 107 each coordinate Zn(2+). Ser-122 bears the Phosphoserine mark. Asn-123 is subject to Deamidated asparagine; partial. The interval 144-173 (PKVPSGVDAGHSERAIPVSREEKPSSAPTS) is disordered. The segment covering 153-167 (GHSERAIPVSREEKP) has biased composition (basic and acidic residues). His-154 is a binding site for Zn(2+). The O-linked (GlcNAc) serine glycan is linked to Ser-162.

It belongs to the small heat shock protein (HSP20) family. As to quaternary structure, heteromer composed of three CRYAA and one CRYAB subunits. Inter-subunit bridging via zinc ions enhances stability, which is crucial as there is no protein turn over in the lens. Can also form homodimers and homotetramers (dimers of dimers) which serve as the building blocks of homooligomers. Within homooligomers, the zinc-binding motif is created from residues of 3 different molecules. His-100 and Glu-102 from one molecule are ligands of the zinc ion, and His-107 and His-154 residues from additional molecules complete the site with tetrahedral coordination geometry. Part of a complex required for lens intermediate filament formation composed of BFSP1, BFSP2 and CRYAA. In terms of processing, acetylation at Lys-70 may increase chaperone activity. Undergoes age-dependent proteolytical cleavage at the C-terminus.

It is found in the cytoplasm. The protein resides in the nucleus. Its function is as follows. Contributes to the transparency and refractive index of the lens. Acts as a chaperone, preventing aggregation of various proteins under a wide range of stress conditions. Required for the correct formation of lens intermediate filaments as part of a complex composed of BFSP1, BFSP2 and CRYAA. The chain is Alpha-crystallin A chain (CRYAA) from Sus scrofa (Pig).